A 334-amino-acid chain; its full sequence is Terpene synthase 1 (334 aa).

2 residues coordinate Mg(2+): Asp82 and Asp86. Positions 82–86 (DDIFD) match the D(D/E)XX(D/E) motif motif. Residue Arg184 coordinates substrate. Positions 230, 234, and 238 each coordinate Mg(2+). The NSE motif motif lies at 230-238 (NDIYSYHRE). A WxxxxxRY motif motif is present at residues 309–316 (WSESCTRY).

The protein belongs to the terpene synthase family. The cofactor is Mg(2+).

The catalysed reaction is (2E,6E)-farnesyl diphosphate = gamma-muurolene + diphosphate. It catalyses the reaction (2E,6E)-farnesyl diphosphate = alpha-muurolene + diphosphate. The enzyme catalyses (2E,6E)-farnesyl diphosphate = (-)-(E)-beta-caryophyllene + diphosphate. It carries out the reaction (2E)-geranyl diphosphate = beta-myrcene + diphosphate. Functionally, terpene synthase that catalyzes the cyclization of farnesyl diphosphate (FPP) into a mixture of sesquiterpenes with gamma-muurolene as the most abundant compound and (-)-beta-caryophyllene, alpha-muurolene, and 4 unidentified sesquiterpenes as minor compoundss. TPS1 also shows monoterpene synthase activity and can also use geranyl diphosphate (GPP) as a substrate to convert it into a mixture of cyclic and acyclic monoterpenes, including myrcene and linalool. P.polycephalum has a unique biology and these volatile terpenoids could function in internal communication of P.polycephalum, to mark the territory that have been explored, or they may be involved in chemotaxis. The sequence is that of Terpene synthase 1 from Physarum polycephalum (Slime mold).